We begin with the raw amino-acid sequence, 316 residues long: Ecto-ADP-ribosyltransferase 5 (316 aa).

The first 23 residues, 1 to 23 (MIQATLLISLSCLSFYTLGSGVR), serve as a signal peptide directing secretion. Cysteine 50 and cysteine 266 form a disulfide bridge. Asparagine 68 is a glycosylation site (N-linked (GlcNAc...) asparagine). In terms of domain architecture, TR mART core spans 70–261 (TRLRESWETA…MTLSSSDQMC (192 aa)). Tyrosine 107 contributes to the NAD(+) binding site. N-linked (GlcNAc...) asparagine glycosylation is present at asparagine 109. NAD(+) contacts are provided by arginine 168 and glutamine 188. Residue arginine 168 is part of the active site. Serine 191 is an active-site residue. Serine 222 contacts NAD(+). The active site involves glutamate 229. 2 N-linked (GlcNAc...) asparagine glycosylation sites follow: asparagine 242 and asparagine 248.

Belongs to the Arg-specific ADP-ribosyltransferase family.

It localises to the secreted. The protein resides in the membrane. The catalysed reaction is L-arginyl-[protein] + NAD(+) = N(omega)-(ADP-D-ribosyl)-L-arginyl-[protein] + nicotinamide + H(+). The protein is Ecto-ADP-ribosyltransferase 5 (ART5) of Bos taurus (Bovine).